Reading from the N-terminus, the 440-residue chain is Cell division protein FtsA (440 aa).

Residues 396-440 are disordered; it reads VSSSEEQEQHHHQNEVQQRPKGKQKTQAEHNKQSKMKKLLSMFWE.

This sequence belongs to the FtsA/MreB family. Homodimer. Interacts with FtsZ.

The protein resides in the cell membrane. Cell division protein that is required for the assembly of the Z ring. May serve as a membrane anchor for the Z ring. Binds and hydrolyzes ATP. Also involved in sporulation. The sequence is that of Cell division protein FtsA from Bacillus subtilis (strain 168).